The primary structure comprises 171 residues: Protein BTG1 (171 aa).

At S159 the chain carries Phosphoserine.

It belongs to the BTG family. In terms of assembly, interacts with CNOT7 and CNOT8.

In terms of biological role, anti-proliferative protein. The polypeptide is Protein BTG1 (BTG1) (Homo sapiens (Human)).